A 176-amino-acid polypeptide reads, in one-letter code: Ribosome rescue factor SmrB (176 aa).

In terms of domain architecture, Smr spans 97-172 (LDMHGMTQQE…GDGALLVLLS (76 aa)).

The protein belongs to the SmrB family. Associates with collided ribosomes, but not with correctly translating polysomes.

Functionally, acts as a ribosome collision sensor. Detects stalled/collided disomes (pairs of ribosomes where the leading ribosome is stalled and a second ribosome has collided with it) and endonucleolytically cleaves mRNA at the 5' boundary of the stalled ribosome. Stalled/collided disomes form a new interface (primarily via the 30S subunits) that binds SmrB. Cleaved mRNA becomes available for tmRNA ligation, leading to ribosomal subunit dissociation and rescue of stalled ribosomes. The protein is Ribosome rescue factor SmrB of Vibrio vulnificus (strain YJ016).